A 381-amino-acid chain; its full sequence is Acetylornithine deacetylase (381 aa).

His79 contributes to the Zn(2+) binding site. Residue Asp81 is part of the active site. Asp111 is a binding site for Zn(2+). Residue Glu143 is part of the active site. Glu144, Glu168, and His354 together coordinate Zn(2+).

The protein belongs to the peptidase M20A family. ArgE subfamily. In terms of assembly, homodimer. It depends on Zn(2+) as a cofactor. Co(2+) serves as cofactor. The cofactor is glutathione.

Its subcellular location is the cytoplasm. It catalyses the reaction N(2)-acetyl-L-ornithine + H2O = L-ornithine + acetate. It functions in the pathway amino-acid biosynthesis; L-arginine biosynthesis; L-ornithine from N(2)-acetyl-L-ornithine (linear): step 1/1. Functionally, catalyzes the hydrolysis of the amide bond of N(2)-acetylated L-amino acids. Cleaves the acetyl group from N-acetyl-L-ornithine to form L-ornithine, an intermediate in L-arginine biosynthesis pathway, and a branchpoint in the synthesis of polyamines. The chain is Acetylornithine deacetylase from Buchnera aphidicola subsp. Acyrthosiphon pisum (strain Tuc7).